The sequence spans 494 residues: Cytochrome P450 2C23 (494 aa).

At S131 the chain carries Phosphoserine. N6-acetyllysine is present on residues K253 and K379. C439 is a binding site for heme.

It belongs to the cytochrome P450 family. Heme is required as a cofactor. As to expression, expressed in kidney and liver. Expressed in cortical tubules of kidney (at protein level).

It is found in the endoplasmic reticulum membrane. The protein localises to the microsome membrane. It catalyses the reaction (5Z,8Z,11Z,14Z)-eicosatetraenoate + reduced [NADPH--hemoprotein reductase] + O2 = (8R,9S)-epoxy-(5Z,11Z,14Z)-eicosatrienoate + oxidized [NADPH--hemoprotein reductase] + H2O + H(+). The enzyme catalyses (5Z,8Z,11Z,14Z)-eicosatetraenoate + reduced [NADPH--hemoprotein reductase] + O2 = (11R,12S)-epoxy-(5Z,8Z,14Z)-eicosatrienoate + oxidized [NADPH--hemoprotein reductase] + H2O + H(+). The catalysed reaction is (5Z,8Z,11Z,14Z)-eicosatetraenoate + reduced [NADPH--hemoprotein reductase] + O2 = (11S,12R)-epoxy-(5Z,8Z,14Z)-eicosatrienoate + oxidized [NADPH--hemoprotein reductase] + H2O + H(+). It carries out the reaction (5Z,8Z,11Z,14Z)-eicosatetraenoate + reduced [NADPH--hemoprotein reductase] + O2 = (14R,15S)-epoxy-(5Z,8Z,11Z)-eicosatrienoate + oxidized [NADPH--hemoprotein reductase] + H2O + H(+). It catalyses the reaction (5Z,8Z,11Z,14Z)-eicosatetraenoate + reduced [NADPH--hemoprotein reductase] + O2 = (14S,15R)-epoxy-(5Z,8Z,11Z)-eicosatrienoate + oxidized [NADPH--hemoprotein reductase] + H2O + H(+). The enzyme catalyses (5Z,8Z,11Z,14Z,17Z)-eicosapentaenoate + reduced [NADPH--hemoprotein reductase] + O2 = 8,9-epoxy-(5Z,11Z,14Z,17Z)-eicosatetraenoate + oxidized [NADPH--hemoprotein reductase] + H2O + H(+). The catalysed reaction is (5Z,8Z,11Z,14Z,17Z)-eicosapentaenoate + reduced [NADPH--hemoprotein reductase] + O2 = 11,12-epoxy-(5Z,8Z,14Z,17Z)-eicosatetraenoate + oxidized [NADPH--hemoprotein reductase] + H2O + H(+). It carries out the reaction (5Z,8Z,11Z,14Z,17Z)-eicosapentaenoate + reduced [NADPH--hemoprotein reductase] + O2 = 14,15-epoxy-(5Z,8Z,11Z,17Z)-eicosatetraenoate + oxidized [NADPH--hemoprotein reductase] + H2O + H(+). It catalyses the reaction (5Z,8Z,11Z,14Z,17Z)-eicosapentaenoate + reduced [NADPH--hemoprotein reductase] + O2 = (17R,18S)-epoxy-(5Z,8Z,11Z,14Z)-eicosatetraenoate + oxidized [NADPH--hemoprotein reductase] + H2O + H(+). The enzyme catalyses (5Z,8Z,11Z,14Z,17Z)-eicosapentaenoate + reduced [NADPH--hemoprotein reductase] + O2 = (17S,18R)-epoxy-(5Z,8Z,11Z,14Z)-eicosatetraenoate + oxidized [NADPH--hemoprotein reductase] + H2O + H(+). The catalysed reaction is 20-hydroxy-(5Z,8Z,11Z,14Z)-eicosatetraenoate + reduced [NADPH--hemoprotein reductase] + O2 = 20-hydroxy-8,9-epoxy-(5Z,11Z,14Z)-eicosatrienoate + oxidized [NADPH--hemoprotein reductase] + H2O + H(+). Its pathway is lipid metabolism; arachidonate metabolism. A cytochrome P450 monooxygenase involved in polyunsaturated fatty acids (PUFAs) metabolism and signaling. Catalyzes preferentially the epoxidation of double bonds of PUFAs. Converts arachidonic acid (ARA, C20:4(n-6)) primarily to stereospecific products 8R,9S-, 11R,12S-, and 14S,15R-EET. Plays a major role in the formation of EETs and hydroxy-EETs (HEETs) in kidney. Via EETs may inhibit the epithelial sodium channels (ENaCs) in nephron segments, preventing excessive sodium absorption during high dietary salt intake. Participates in the formation of anti-inflammatory hydroxyepoxyeicosatrienoic acids (HEETs) by converting 20-hydroxyeicosatetraenoic acid (20-HETE) to 20,8,9-HEET, an activator of PPARA. Metabolizes eicosapentaenoic acid (EPA, C20:5(n-3)) to epoxyeicosatetraenoic acid (EETeTr) regioisomers, 8,9-, 11,12-, 14,15-, and 17,18-EETeTr, preferentially producing 17R,18S enantiomer. Mechanistically, uses molecular oxygen inserting one oxygen atom into a substrate, and reducing the second into a water molecule, with two electrons provided by NADPH via cytochrome P450 reductase (NADPH--hemoprotein reductase). This chain is Cytochrome P450 2C23, found in Rattus norvegicus (Rat).